A 35-amino-acid polypeptide reads, in one-letter code: Potassium channel toxin alpha-KTx 6.15 (35 aa).

Intrachain disulfides connect Cys-3–Cys-24, Cys-9–Cys-29, Cys-13–Cys-31, and Cys-19–Cys-34.

The protein belongs to the short scorpion toxin superfamily. Potassium channel inhibitor family. Alpha-KTx 06 subfamily. In terms of tissue distribution, expressed by the venom gland.

It localises to the secreted. Blocks voltage-gated potassium channels rKv1.1/KCNA1 (IC(50)=13 nM), rKv1.2/KCNA2 (IC(50)=16 nM) and rKv1.3/KCNA3 (IC(50)=2 nM). This chain is Potassium channel toxin alpha-KTx 6.15, found in Hemiscorpius lepturus (Scorpion).